We begin with the raw amino-acid sequence, 239 residues long: Pentatricopeptide repeat-containing protein DWY1, chloroplastic (239 aa).

The N-terminal 35 residues, 1–35 (MALEAAFSMSFCSFSVPKAIFCERETSSFQRITSR), are a transit peptide targeting the chloroplast. Disordered regions lie at residues 40-59 (AGES…KETS) and 101-122 (HISP…SGGE). Over residues 111–122 (VRGDKPEISGGE) the composition is skewed to basic and acidic residues. The segment at 113-144 (GDKPEISGGEKKAIVDRSKAYVKLKSLGKEVR) is type E(+) motif. Positions 145–239 (DAGYVPETKY…DGNCSCGDYW (95 aa)) are type DYW motif.

It belongs to the PPR family. PCMP-H subfamily. Interacts with CRR4. Requires Zn(2+) as cofactor.

Its subcellular location is the plastid. It localises to the chloroplast. Functionally, plays a major role in single RNA editing events in chloroplasts. Acts as a site-recognition transacting factor involved in the edition of the site 1 of ndhD (ndhD-1 site corresponding to cytidine-2), which is a plastid-encoded subunit of the NADH-plastoquinone oxidoreductase. The interaction with CRR4 is required for its function in editing the ndhD-1 site. This Arabidopsis thaliana (Mouse-ear cress) protein is Pentatricopeptide repeat-containing protein DWY1, chloroplastic.